We begin with the raw amino-acid sequence, 521 residues long: Glycogen synthase (521 aa).

Residue Lys-18 participates in ADP-alpha-D-glucose binding.

The protein belongs to the glycosyltransferase 1 family. Bacterial/plant glycogen synthase subfamily.

It carries out the reaction [(1-&gt;4)-alpha-D-glucosyl](n) + ADP-alpha-D-glucose = [(1-&gt;4)-alpha-D-glucosyl](n+1) + ADP + H(+). The protein operates within glycan biosynthesis; glycogen biosynthesis. Its function is as follows. Synthesizes alpha-1,4-glucan chains using ADP-glucose. This chain is Glycogen synthase, found in Bordetella petrii (strain ATCC BAA-461 / DSM 12804 / CCUG 43448).